Consider the following 295-residue polypeptide: Phosphoribosylaminoimidazole-succinocarboxamide synthase (295 aa).

This sequence belongs to the SAICAR synthetase family.

It carries out the reaction 5-amino-1-(5-phospho-D-ribosyl)imidazole-4-carboxylate + L-aspartate + ATP = (2S)-2-[5-amino-1-(5-phospho-beta-D-ribosyl)imidazole-4-carboxamido]succinate + ADP + phosphate + 2 H(+). It functions in the pathway purine metabolism; IMP biosynthesis via de novo pathway; 5-amino-1-(5-phospho-D-ribosyl)imidazole-4-carboxamide from 5-amino-1-(5-phospho-D-ribosyl)imidazole-4-carboxylate: step 1/2. This is Phosphoribosylaminoimidazole-succinocarboxamide synthase from Desulforapulum autotrophicum (strain ATCC 43914 / DSM 3382 / VKM B-1955 / HRM2) (Desulfobacterium autotrophicum).